The chain runs to 920 residues: Androgen receptor (920 aa).

A modulating region spans residues 1-559 (MEVQLGLGRV…IDYYFPPQKT (559 aa)). An interaction with ZNF318 region spans residues 1 to 587 (MEVQLGLGRV…GSCKVFFKRA (587 aa)). 2 disordered regions span residues 36–167 (NPGP…LSLL) and 195–228 (QQQQ…YLGG). Low complexity predominate over residues 44-91 (AASAAPPGASLLLLQQQQQQQQQQQQQQQQQQQQQQQETSPRQQQQQQ). S83 is modified (phosphoserine; by CDK9). A Phosphoserine modification is found at S96. Positions 195 to 217 (QQQQQEAVSEGSSSGRAREASGA) are enriched in low complexity. Residues 218 to 228 (PTSSKDNYLGG) are compositionally biased toward polar residues. A Phosphotyrosine; by CSK modification is found at Y225. Residue S258 is modified to Phosphoserine. The residue at position 269 (Y269) is a Phosphotyrosine; by CSK and TNK2. A phosphotyrosine; by CSK mark is found at Y309, Y348, Y359, and Y364. Y365 carries the post-translational modification Phosphotyrosine; by CSK and TNK2. A Glycyl lysine isopeptide (Lys-Gly) (interchain with G-Cter in SUMO) cross-link involves residue K388. Residue Y395 is modified to Phosphotyrosine; by CSK. Residue K521 forms a Glycyl lysine isopeptide (Lys-Gly) (interchain with G-Cter in SUMO) linkage. A phosphotyrosine; by CSK mark is found at Y535 and Y552. The interaction with LPXN stretch occupies residues 552–919 (YYFPPQKTCL…GKVKPIYFHT (368 aa)). 2 consecutive NR C4-type zinc fingers follow at residues 560-580 (CLIC…CGSC) and 596-620 (CASR…LRKC). The segment at residues 560–632 (CLICGDEASG…AGMTLGARKL (73 aa)) is a DNA-binding region (nuclear receptor). The tract at residues 572–662 (YGALTCGSCK…TEETTQKLTV (91 aa)) is interaction with HIPK3. The interaction with CCAR1 stretch occupies residues 592–919 (QKYLCASRND…GKVKPIYFHT (328 aa)). Residues 625–919 (MTLGARKLKK…GKVKPIYFHT (295 aa)) are interaction with KAT7. Phosphoserine; by STK4/MST1 is present on S651. The region spanning 669–900 (ECQPIFLNVL…DFPEMMAEII (232 aa)) is the NR LBD domain. N706 and R753 together coordinate 17beta-hydroxy-5alpha-androstan-3-one. Residues K846 and K848 each participate in a glycyl lysine isopeptide (Lys-Gly) (interchain with G-Cter in ubiquitin) cross-link. T878 provides a ligand contact to 17beta-hydroxy-5alpha-androstan-3-one. Y916 carries the post-translational modification Phosphotyrosine; by CSK.

This sequence belongs to the nuclear hormone receptor family. NR3 subfamily. In terms of assembly, binds DNA as a homodimer. Part of a ternary complex containing AR, EFCAB6/DJBP and PARK7. Interacts with HIPK3 and NR0B2 in the presence of androgen. The ligand binding domain interacts with KAT7/HBO1 in the presence of dihydrotestosterone. Interacts with EFCAB6/DJBP, PQBP1, RANBP9, RBAK, SPDEF, SRA1, TGFB1I1 and RREB1. Interacts with ZMIZ1/ZIMP10 and ZMIZ2/ZMIP7 which both enhance its transactivation activity. Interacts with SLC30A9 and RAD54L2/ARIP4. Interacts with MACROD1 (via macro domain). Interacts via the ligand-binding domain with LXXLL and FXXLF motifs from NCOA1, NCOA2, NCOA3 and MAGEA11. Interacts (via nuclear receptor DNA binding domain and nuclear receptor ligand binding domain) with NCOA4. The AR N-terminal poly-Gln region binds Ran resulting in enhancement of AR-mediated transactivation. Ran-binding decreases as the poly-Gln length increases. Interacts with HIP1 (via coiled coil domain). Interacts (via ligand-binding domain) with TRIM68. Interacts with TNK2. Interacts with USP26. Interacts with RNF6. Interacts (regulated by RNF6 probably through polyubiquitination) with RNF14; regulates AR transcriptional activity. Interacts with PRMT2 and TRIM24. Interacts with RACK1. Interacts with RANBP10; this interaction enhances dihydrotestosterone-induced AR transcriptional activity. Interacts with PRPF6 in a hormone-independent way; this interaction enhances dihydrotestosterone-induced AR transcriptional activity. Interacts with STK4/MST1. Interacts with ZIPK/DAPK3. Interacts with LPXN. Interacts with MAK. Part of a complex containing AR, MAK and NCOA3. Interacts with CRY1. Interacts with CCAR1 and GATA2. Interacts with ZNF318. Interacts with BUD31. Interacts with ARID4A. Interacts with ARID4B. Interacts (via NR LBD domain) with ZBTB7A; the interaction is direct and androgen-dependent. Interacts with NCOR1. Interacts with NCOR2. Interacts with CRY2 in a ligand-dependent manner. In terms of processing, sumoylated on Lys-388 (major) and Lys-521. Ubiquitinated. Deubiquitinated by USP26. 'Lys-6' and 'Lys-27'-linked polyubiquitination by RNF6 modulates AR transcriptional activity and specificity. Phosphorylated in prostate cancer cells in response to several growth factors including EGF. Phosphorylation is induced by c-Src kinase (CSK). Tyr-535 is one of the major phosphorylation sites and an increase in phosphorylation and Src kinase activity is associated with prostate cancer progression. Phosphorylation by TNK2 enhances the DNA-binding and transcriptional activity and may be responsible for androgen-independent progression of prostate cancer. Phosphorylation at Ser-83 by CDK9 regulates AR promoter selectivity and cell growth. Phosphorylation by PAK6 leads to AR-mediated transcription inhibition. Post-translationally, palmitoylated by ZDHHC7 and ZDHHC21. Palmitoylation is required for plasma membrane targeting and for rapid intracellular signaling via ERK and AKT kinases and cAMP generation. Mainly expressed in heart and skeletal muscle. As to expression, expressed in basal and stromal cells of the prostate (at protein level).

The protein resides in the nucleus. The protein localises to the cytoplasm. Its activity is regulated as follows. AIM-100 (4-amino-5,6-biaryl-furo[2,3-d]pyrimidine) suppresses TNK2-mediated phosphorylation at Tyr-269. Inhibits the binding of the Tyr-269 phosphorylated form to androgen-responsive enhancers (AREs) and its transcriptional activity. Functionally, steroid hormone receptors are ligand-activated transcription factors that regulate eukaryotic gene expression and affect cellular proliferation and differentiation in target tissues. Transcription factor activity is modulated by bound coactivator and corepressor proteins like ZBTB7A that recruits NCOR1 and NCOR2 to the androgen response elements/ARE on target genes, negatively regulating androgen receptor signaling and androgen-induced cell proliferation. Transcription activation is also down-regulated by NR0B2. Activated, but not phosphorylated, by HIPK3 and ZIPK/DAPK3. Its function is as follows. Lacks the C-terminal ligand-binding domain and may therefore constitutively activate the transcription of a specific set of genes independently of steroid hormones. The protein is Androgen receptor (AR) of Homo sapiens (Human).